A 327-amino-acid polypeptide reads, in one-letter code: Thiamine thiazole synthase (327 aa).

Residues C86, 107–108 (EA), G115, and V182 each bind substrate. C216 carries the 2,3-didehydroalanine (Cys) modification. Residues D218, H233, M285, and 295–297 (RMG) each bind substrate.

This sequence belongs to the THI4 family. As to quaternary structure, homooctamer. Fe cation serves as cofactor. During the catalytic reaction, a sulfide is transferred from Cys-216 to a reaction intermediate, generating a dehydroalanine residue.

The protein localises to the cytoplasm. The protein resides in the nucleus. The enzyme catalyses [ADP-thiazole synthase]-L-cysteine + glycine + NAD(+) = [ADP-thiazole synthase]-dehydroalanine + ADP-5-ethyl-4-methylthiazole-2-carboxylate + nicotinamide + 3 H2O + 2 H(+). Its function is as follows. Involved in biosynthesis of the thiamine precursor thiazole. Catalyzes the conversion of NAD and glycine to adenosine diphosphate 5-(2-hydroxyethyl)-4-methylthiazole-2-carboxylic acid (ADT), an adenylated thiazole intermediate. The reaction includes an iron-dependent sulfide transfer from a conserved cysteine residue of the protein to a thiazole intermediate. The enzyme can only undergo a single turnover, which suggests it is a suicide enzyme. May have additional roles in adaptation to various stress conditions and in DNA damage tolerance. The chain is Thiamine thiazole synthase from Aspergillus oryzae (strain ATCC 42149 / RIB 40) (Yellow koji mold).